Reading from the N-terminus, the 428-residue chain is Histidinol dehydrogenase (428 aa).

NAD(+) is bound by residues Y126, Q188, and N211. Residues S234, Q256, and H259 each coordinate substrate. 2 residues coordinate Zn(2+): Q256 and H259. Active-site proton acceptor residues include E324 and H325. Residues H325, D358, E412, and H417 each contribute to the substrate site. D358 contributes to the Zn(2+) binding site. H417 lines the Zn(2+) pocket.

It belongs to the histidinol dehydrogenase family. Zn(2+) serves as cofactor.

It carries out the reaction L-histidinol + 2 NAD(+) + H2O = L-histidine + 2 NADH + 3 H(+). Its pathway is amino-acid biosynthesis; L-histidine biosynthesis; L-histidine from 5-phospho-alpha-D-ribose 1-diphosphate: step 9/9. Catalyzes the sequential NAD-dependent oxidations of L-histidinol to L-histidinaldehyde and then to L-histidine. The chain is Histidinol dehydrogenase from Chlorobium chlorochromatii (strain CaD3).